A 956-amino-acid polypeptide reads, in one-letter code: Plasma membrane ATPase 1 (956 aa).

The Cytoplasmic segment spans residues 1–65 (MAEKPEVLDA…EKKESKFLKF (65 aa)). Residues 66–85 (LGFMWNPLSWVMEAAAIMAI) form a helical membrane-spanning segment. Topologically, residues 86-97 (ALANGGGKPPDW) are extracellular. The helical transmembrane segment at 98–118 (QDFVGIITLLIINSTISFIEE) threads the bilayer. Topologically, residues 119–247 (NNAGNAAAAL…GHFQKVLTAI (129 aa)) are cytoplasmic. A helical transmembrane segment spans residues 248-268 (GNFCICSIAVGMIIEIIVMYP). The Extracellular segment spans residues 269–277 (IQHRKYRPG). The chain crosses the membrane as a helical span at residues 278 to 295 (IDNLLVLLIGGIPIAMPT). Residues 296-646 (VLSVTMAIGS…LTSRAIFQRM (351 aa)) are Cytoplasmic-facing. Aspartate 333 functions as the 4-aspartylphosphate intermediate in the catalytic mechanism. 2 residues coordinate Mg(2+): aspartate 592 and aspartate 596. The chain crosses the membrane as a helical span at residues 647–666 (KNYTIYAVSITIRIVLGFML). At 667–674 (LALIWKFD) the chain is on the extracellular side. The helical transmembrane segment at 675–697 (FPPFMVLIIAILNDGTIMTISKD) threads the bilayer. Over 698 to 713 (RVKPSPLPDSWKLAEI) the chain is Cytoplasmic. A helical transmembrane segment spans residues 714 to 734 (FTTGVVLGGYLAMMTVIFFWA). The Extracellular segment spans residues 735-759 (AYKTNFFPRIFGVSTLEKTATDDFR). The helical transmembrane segment at 760–780 (KLASAIYLQVSTISQALIFVT) threads the bilayer. At 781–792 (RSRSWSFVERPG) the chain is on the cytoplasmic side. A helical membrane pass occupies residues 793-813 (LLLVFAFFVAQLVATLIAVYA). Over 814–821 (NWSFAAIE) the chain is Extracellular. Residues 822 to 842 (GIGWGWAGVIWLYNIVTYIPL) form a helical membrane-spanning segment. The Cytoplasmic portion of the chain corresponds to 843-956 (DLIKFLIRYA…IETIQQSYTV (114 aa)).

Belongs to the cation transport ATPase (P-type) (TC 3.A.3) family. Type IIIA subfamily. As to quaternary structure, possibly exists as a homodimer or a homotrimer.

The protein resides in the cell membrane. The catalysed reaction is ATP + H2O + H(+)(in) = ADP + phosphate + 2 H(+)(out). Its function is as follows. The plasma membrane ATPase of plants and fungi is a hydrogen ion pump. The proton gradient it generates drives the active transport of nutrients by H(+)-symport. The resulting external acidification and/or internal alkinization may mediate growth responses. The sequence is that of Plasma membrane ATPase 1 (LHA1) from Solanum lycopersicum (Tomato).